The sequence spans 178 residues: SsrA-binding protein (178 aa).

The segment at 1 to 28 (MAKKSTPVDSGRSKGKKASAPRGGGPAV) is disordered.

The protein belongs to the SmpB family.

It localises to the cytoplasm. Functionally, required for rescue of stalled ribosomes mediated by trans-translation. Binds to transfer-messenger RNA (tmRNA), required for stable association of tmRNA with ribosomes. tmRNA and SmpB together mimic tRNA shape, replacing the anticodon stem-loop with SmpB. tmRNA is encoded by the ssrA gene; the 2 termini fold to resemble tRNA(Ala) and it encodes a 'tag peptide', a short internal open reading frame. During trans-translation Ala-aminoacylated tmRNA acts like a tRNA, entering the A-site of stalled ribosomes, displacing the stalled mRNA. The ribosome then switches to translate the ORF on the tmRNA; the nascent peptide is terminated with the 'tag peptide' encoded by the tmRNA and targeted for degradation. The ribosome is freed to recommence translation, which seems to be the essential function of trans-translation. This is SsrA-binding protein from Corynebacterium urealyticum (strain ATCC 43042 / DSM 7109).